Reading from the N-terminus, the 154-residue chain is 3-dehydroquinate dehydratase (154 aa).

The active-site Proton acceptor is the Tyr23. Residues Asn75, His81, and Asp88 each contribute to the substrate site. Residue His101 is the Proton donor of the active site. Residues 102–103 (LS) and Arg112 contribute to the substrate site.

This sequence belongs to the type-II 3-dehydroquinase family. As to quaternary structure, homododecamer.

It catalyses the reaction 3-dehydroquinate = 3-dehydroshikimate + H2O. It functions in the pathway metabolic intermediate biosynthesis; chorismate biosynthesis; chorismate from D-erythrose 4-phosphate and phosphoenolpyruvate: step 3/7. Its function is as follows. Catalyzes a trans-dehydration via an enolate intermediate. This is 3-dehydroquinate dehydratase from Teredinibacter turnerae (strain ATCC 39867 / T7901).